A 300-amino-acid polypeptide reads, in one-letter code: Sulfate adenylyltransferase subunit 2 (300 aa).

Residues Arg-281–Phe-300 form a disordered region.

This sequence belongs to the PAPS reductase family. CysD subfamily. Heterodimer composed of CysD, the smaller subunit, and CysN.

The catalysed reaction is sulfate + ATP + H(+) = adenosine 5'-phosphosulfate + diphosphate. It functions in the pathway sulfur metabolism; hydrogen sulfide biosynthesis; sulfite from sulfate: step 1/3. With CysN forms the ATP sulfurylase (ATPS) that catalyzes the adenylation of sulfate producing adenosine 5'-phosphosulfate (APS) and diphosphate, the first enzymatic step in sulfur assimilation pathway. APS synthesis involves the formation of a high-energy phosphoric-sulfuric acid anhydride bond driven by GTP hydrolysis by CysN coupled to ATP hydrolysis by CysD. The sequence is that of Sulfate adenylyltransferase subunit 2 from Brucella abortus (strain 2308).